The sequence spans 337 residues: Glyceraldehyde-3-phosphate dehydrogenase (337 aa).

NAD(+) contacts are provided by residues 12–13, Asp-34, and Lys-79; that span reads RI. Residues 150–152, Thr-181, 210–211, and Arg-233 contribute to the D-glyceraldehyde 3-phosphate site; these read SCT and TG. Residue Cys-151 is the Nucleophile of the active site. Residue Asn-315 participates in NAD(+) binding.

Belongs to the glyceraldehyde-3-phosphate dehydrogenase family. In terms of assembly, homotetramer.

The protein resides in the cytoplasm. It catalyses the reaction D-glyceraldehyde 3-phosphate + phosphate + NAD(+) = (2R)-3-phospho-glyceroyl phosphate + NADH + H(+). It functions in the pathway carbohydrate degradation; glycolysis; pyruvate from D-glyceraldehyde 3-phosphate: step 1/5. The chain is Glyceraldehyde-3-phosphate dehydrogenase (GPD) from Phanerodontia chrysosporium (White-rot fungus).